The following is a 432-amino-acid chain: MSGRDGGERTPLLEAHSLTTSDCAAGAPDPSRCLKTEASQVMAETGEGYFEAVALPPPQLPEEESAPSTAPSDPGCAGTFQIRAGGDGGYVVPEARLEPAPPPTESLETASVSLATDDSLGNGCQPGEPQGLSREKPLETCGAEKLGSDLMAEAKAEEVKTEEGPVFSVAVDEEVVGKEGAKEEEGVEQGMEVEERPVGEEIEMVENRVVEEAGHRPLRMDLRMNPLEAIQLELDSVNAQADRAFQQLEHKFGRMRRHYLERRNYIIQNIPGFWVTAFRNHPQLSPMIRGQDAEMLRYITNLEVKELRHPRTGCKFKFFFRRNPYFRNKLIVKEYEVRASGRVVSLSTPIIWRRGHEPQSFIRRNQEVVCNFFTWFSDHSLPESDRIAEIIKEDLWPNPLQYYLLREGVRRARRRPIREPVEIPRPFGFQSG.

Disordered stretches follow at residues methionine 1 to serine 31, alanine 54 to alanine 110, and threonine 116 to glutamate 135. A Glycyl lysine isopeptide (Lys-Gly) (interchain with G-Cter in SUMO2) cross-link involves residue lysine 160.

The protein belongs to the nucleosome assembly protein (NAP) family. Ubiquitinated by the CRL2(APPBP2) complex, which recognizes the Arg-Xaa-Xaa-Gly sequence at the C-terminus, leading to its degradation.

The protein resides in the nucleus. It localises to the nucleolus. This chain is Testis-specific Y-encoded-like protein 1 (TSPYL1), found in Bos taurus (Bovine).